Here is a 518-residue protein sequence, read N- to C-terminus: Type II methyltransferase M.HindII (518 aa).

It belongs to the N(4)/N(6)-methyltransferase family.

The enzyme catalyses a 2'-deoxyadenosine in DNA + S-adenosyl-L-methionine = an N(6)-methyl-2'-deoxyadenosine in DNA + S-adenosyl-L-homocysteine + H(+). In terms of biological role, a gamma subtype methylase, recognizes the double-stranded sequence 5'-GTYRAC-3', methylates A-5 on both strands, and protects the DNA from cleavage by the HindII endonuclease. The chain is Type II methyltransferase M.HindII (hindIIM) from Haemophilus influenzae (strain ATCC 51907 / DSM 11121 / KW20 / Rd).